A 56-amino-acid chain; its full sequence is MAYVINDSCISCGACEPECPVNAITAGDDKYVIDAATCIDCGACAGVCPVDAPQPE.

4Fe-4S ferredoxin-type domains lie at 2-29 (AYVI…AGDD) and 29-56 (DKYV…PQPE). [4Fe-4S] cluster contacts are provided by Cys9, Cys12, Cys15, Cys19, Cys38, Cys41, Cys44, and Cys48.

Requires [4Fe-4S] cluster as cofactor.

Functionally, ferredoxins are iron-sulfur proteins that transfer electrons in a wide variety of metabolic reactions. This is Ferredoxin from Acetoanaerobium sticklandii (strain ATCC 12662 / DSM 519 / JCM 1433 / CCUG 9281 / NCIMB 10654 / HF) (Clostridium sticklandii).